We begin with the raw amino-acid sequence, 311 residues long: MLKTTFANAEFANPFMNASGVHCMTTEDLEELKASQAGAYITKSSTLEKREGNPLPRYVDLELGSINSMGLPNLGFDYYLDYVLKNQKEKAQEAPIFFSIAGMSAAENIAMLKKIQESNFSGITELNLSCPNVPGKPQLAYDFEATEKLLKEVFTFFTKPLGVKLPPYFDLVHFDIMAEILNQFPLTYVNSVNSIGNGLFIDSEAESVVIKPKDGFGGIGGAYIKPTALANVRAFYTRLKPEIKIIGTGGIETGQDAFEHLLCGATMLQIGTALHKEGPAIFDRIIKELEEIMDKKGYQSIADFHGKLKSL.

Residues S19 and 43-44 contribute to the FMN site; that span reads KS. Substrate is bound by residues K43, 67–71, and N127; that span reads NSMGL. Position 127 (N127) interacts with FMN. C130 serves as the catalytic Nucleophile. FMN-binding residues include K164 and V192. 193–194 contributes to the substrate binding site; it reads NS. Residues G221, 249–250, and 271–272 contribute to the FMN site; these read GG and GT.

This sequence belongs to the dihydroorotate dehydrogenase family. Type 1 subfamily. Homodimer. FMN serves as cofactor.

The protein localises to the cytoplasm. The enzyme catalyses (S)-dihydroorotate + fumarate = orotate + succinate. Its pathway is pyrimidine metabolism; UMP biosynthesis via de novo pathway. Catalyzes the conversion of dihydroorotate to orotate with fumarate as the electron acceptor. The sequence is that of Dihydroorotate dehydrogenase A (fumarate) (pyrDA) from Lactococcus lactis subsp. lactis (strain IL1403) (Streptococcus lactis).